We begin with the raw amino-acid sequence, 252 residues long: Protein PF0476 (252 aa).

Belongs to the CinA family.

The chain is Protein PF0476 from Pyrococcus furiosus (strain ATCC 43587 / DSM 3638 / JCM 8422 / Vc1).